The primary structure comprises 127 residues: Large ribosomal subunit protein bL17 (127 aa).

It belongs to the bacterial ribosomal protein bL17 family. Part of the 50S ribosomal subunit. Contacts protein L32.

This chain is Large ribosomal subunit protein bL17, found in Levilactobacillus brevis (strain ATCC 367 / BCRC 12310 / CIP 105137 / JCM 1170 / LMG 11437 / NCIMB 947 / NCTC 947) (Lactobacillus brevis).